Reading from the N-terminus, the 189-residue chain is Peptidyl-tRNA hydrolase (189 aa).

Tyrosine 17 is a binding site for tRNA. Residue histidine 22 is the Proton acceptor of the active site. Positions 65, 67, and 113 each coordinate tRNA.

It belongs to the PTH family. Monomer.

Its subcellular location is the cytoplasm. It catalyses the reaction an N-acyl-L-alpha-aminoacyl-tRNA + H2O = an N-acyl-L-amino acid + a tRNA + H(+). Hydrolyzes ribosome-free peptidyl-tRNAs (with 1 or more amino acids incorporated), which drop off the ribosome during protein synthesis, or as a result of ribosome stalling. Its function is as follows. Catalyzes the release of premature peptidyl moieties from peptidyl-tRNA molecules trapped in stalled 50S ribosomal subunits, and thus maintains levels of free tRNAs and 50S ribosomes. The protein is Peptidyl-tRNA hydrolase of Mycoplasma genitalium (strain ATCC 33530 / DSM 19775 / NCTC 10195 / G37) (Mycoplasmoides genitalium).